The following is a 131-amino-acid chain: Cruxhalorhodopsin-1 (131 aa).

Residues 1–11 form a helical membrane-spanning segment; it reads PMILLALGLLA. Residues 12–14 lie on the Cytoplasmic side of the membrane; it reads DTD. Residues 15–38 form a helical membrane-spanning segment; sequence IASLFTAITMDIGMCVTGLAAALI. Over 39-41 the chain is Extracellular; sequence TSS. The helical transmembrane segment at 42-64 threads the bilayer; sequence HLLRWVFYGISCAFFVAVLYVLL. Residues 65-76 lie on the Cytoplasmic side of the membrane; the sequence is VQWPADAEAAGT. The chain crosses the membrane as a helical span at residues 77–100; sequence SEIFGTLKILTVVLWLGYPILWAL. Residues 101–109 are Extracellular-facing; the sequence is GSEGVALLS. The chain crosses the membrane as a helical span at residues 110-131; sequence VGVTSWGYSGLDILAKYVFAFI. N6-(retinylidene)lysine is present on lysine 125.

It belongs to the archaeal/bacterial/fungal opsin family.

Its subcellular location is the cell membrane. In terms of biological role, light-driven chloride pump. The polypeptide is Cruxhalorhodopsin-1 (choP1) (Haloarcula argentinensis).